Consider the following 70-residue polypeptide: DNA-directed RNA polymerase subunit omega (70 aa).

It belongs to the RNA polymerase subunit omega family. As to quaternary structure, the RNAP catalytic core consists of 2 alpha, 1 beta, 1 beta' and 1 omega subunit. When a sigma factor is associated with the core the holoenzyme is formed, which can initiate transcription.

It catalyses the reaction RNA(n) + a ribonucleoside 5'-triphosphate = RNA(n+1) + diphosphate. In terms of biological role, promotes RNA polymerase assembly. Latches the N- and C-terminal regions of the beta' subunit thereby facilitating its interaction with the beta and alpha subunits. The protein is DNA-directed RNA polymerase subunit omega of Nitratiruptor sp. (strain SB155-2).